A 145-amino-acid polypeptide reads, in one-letter code: Bacilliredoxin BH2759 (145 aa).

Belongs to the bacilliredoxin family.

This Halalkalibacterium halodurans (strain ATCC BAA-125 / DSM 18197 / FERM 7344 / JCM 9153 / C-125) (Bacillus halodurans) protein is Bacilliredoxin BH2759.